The following is a 1657-amino-acid chain: MSAAEEVDGLGVVRPHYGSVLDNERLTAEEMDERRRQNVAYEYLCHLEEAKRWMEACLGEDLPPTTELEEGLRNGVYLAKLGNFFSPKVVSLKKIYDREQTRYKATGLHFRHTDNVIQWLNAMDEIGLPKIFYPETTDIYDRKNMPRCIYCIHALSLYLFKLGLAPQIQDLYGKVDFTEEEINNMKIELEKYGIQMPAFSKIGGILANELSVDEAALHAAVIAINEAIDRRVAADTFTALKNPNAMLVNLEEGLAPTYQDVLYQAKQDKMTNAKNRTENSDRERDVYEELLTQAEIQGNVNKVNTSSALANISLALEQGCAVTLLKALQSLALGLRGLQTQNSDWYMKQLQSDLQQKRQSGQTDPLQKEEVQAGVDAANSAAQQYQRRLAAVAAINAAIQKGIAEKTVLELMNPEAQLPQVYPFAADLYQKELATLQQQSPEHSLTHPELTVAVEMLSSVALINRALESGDMTTVWKQLSSSVTGLTNIEEENCQRYLDELMKLKAQAHAENNAFITWNDIQACVDHVNLVVHEEHERILAIGLINEALDEGDAQKTLQALQIPAAKLEGVLAEVAQHYQDTLIRAKREKAQETQDESAVLWLDEIQGGIWQSNKDTQEAQRFALGISAINEAVDSGDVGRTLSALRSPDVGLYGVIPECGETYQSDLAEAKKKRLAAGDNNSKWVKHWVKGGYHYYHNLETQAGGWAEPPDFVQNSVQLSREEIQSSISGVTAAYNREQLWLANEGLITKLQACCRGYLVRQEFRSRMNFLKKQIPAITCIQSQWRGYKQKKAYQDRLAYLHSHKDEVVKIQSLARMHQARKRYRDRLQYFRDHINDIIKIQAFIRANKARDDYKTLINAEDPPMIVVRKFVHLLDQSDQDFQEELDLMKMREEVITLIRSNQQLENDLNLMDIKIGLLVKNKITLQDVVSHSKKLTKKNKEQLSDMMMINKQKGGLKALSKEKREKLEAYQHLFYLLQTNPTYLAKLIFQMPQNKSTKFMDSVIFTLYNYASNQREEYLLLRLFQTALQEEIKSKVDQIQEIVTGNPTVIKMVVSFNRGARGQNALRQILAPVVKEIMDDKSLNIKTDPVDIYKSWVNQMESQTGEASKLPYDVTPEQALSHEEVKTRLDNSIRNMRAVTDKFLSAIVSSVDKIPYGMRFIAKVLKDSLHEKFPDAGEDELLKIIGNLLYYRYMNPAIVAPDAFDIIDLSAGGQLTTDQRRNLGSIAKMLQHAASNKMFLGDNAHLSIINEYLSQSYQKFRRFFQVACDVPELQDKFNVDEYSDLVTLTKPVIYISIGEIINTHTLLLDHQDAIAPEHNDPIHELLDDLGEVPTIESLIGESCGNSNDPNKEALAKTEVSLTLTNKFDVPGDENAEMDARTILLNTKRLIVDVIRFQPGETLTEILETPATNEQEAEHQRAMQRRAIRDAKTPDKMKKSKPMKEDNNLSLQEKKEKIQTGLKKLTELGTVDPKNRYQELINDIAKDIRNQRRYRQRRKAELVKLQQTYSALNSKATFYGEQVDYYKSYIKTCLDNLASKGKVSKKPREMKGKKSKKISLKYTAARLHEKGVLLEIEDLQANQFKNVIFEIGPTEEVGDFEVKAKFMGVQMETFMLHYQDLLQLQYEGVAVMKLFDRAKVNVNLLIFLLNKKFYGK.

An N-acetylserine modification is found at S2. S2 is subject to Phosphoserine. Positions 44–159 (LCHLEEAKRW…YCIHALSLYL (116 aa)) constitute a Calponin-homology (CH) domain. The residue at position 172 (Y172) is a Phosphotyrosine. S330 is subject to Phosphoserine. The region spanning 685–710 (WVKHWVKGGYHYYHNLETQAGGWAEP) is the WW domain. IQ domains follow at residues 745–774 (NEGL…FLKK), 775–804 (QIPA…YLHS), 805–834 (HKDE…YFRD), and 835–864 (HIND…AEDP). The interval 956 to 1274 (GGLKALSKEK…FFQVACDVPE (319 aa)) is C1. Residues 1020–1269 (YLLLRLFQTA…QKFRRFFQVA (250 aa)) enclose the Ras-GAP domain. The segment at 1276 to 1657 (QDKFNVDEYS…FLLNKKFYGK (382 aa)) is C2. S1441 carries the phosphoserine modification.

As to quaternary structure, interacts with CDC42; the interaction is demonstrated with IQGAP1 in GTP-bound and in nucleotide-free state. Interacts with RAC1. Does not interact with RHOA. Interacts with TSG101. Interacts with PAK6. Interacts with SASH1. Interacts with PJVK. Interacts with SLC26A4. This interaction enhances the chloride-bicarbonate exchange activity of SLC26A4. Interacts with SVEP1. Interacts with ILK; the interaction is required for localization of IQGAP to the cell cortex. In terms of assembly, (Microbial infection) In case of infection, interacts with S.typhimurium protein sseI. As to expression, expressed in the kidney (at protein level).

It is found in the cell membrane. Its subcellular location is the nucleus. The protein localises to the cytoplasm. The protein resides in the cell cortex. It localises to the apical cell membrane. It is found in the basolateral cell membrane. Functionally, plays a crucial role in regulating the dynamics and assembly of the actin cytoskeleton. Recruited to the cell cortex by interaction with ILK which allows it to cooperate with its effector DIAPH1 to locally stabilize microtubules and allow stable insertion of caveolae into the plasma membrane. Binds to activated CDC42 but does not stimulate its GTPase activity. Associates with calmodulin. May promote neurite outgrowth. May play a possible role in cell cycle regulation by contributing to cell cycle progression after DNA replication arrest. The chain is Ras GTPase-activating-like protein IQGAP1 (Iqgap1) from Mus musculus (Mouse).